The following is a 298-amino-acid chain: Probable 3-mercaptopyruvate sulfurtransferase (298 aa).

Residues 24–141 form the Rhodanese 1 domain; it reads NAQKTVLLDA…WKTEGLELET (118 aa). Positions 142 to 175 are hinge; that stretch reads GEPRTPKPVVYEGAKLNKDLVASFDDIVKVIESP. The residue at position 164 (Ser164) is a Phosphoserine. A Rhodanese 2 domain is found at 176–292; sequence DAAGVHIVDA…YGKRANEDSS (117 aa). Arg190 lines the substrate pocket. Residue Cys252 is the Cysteine persulfide intermediate of the active site.

The protein resides in the mitochondrion. It catalyses the reaction 2-oxo-3-sulfanylpropanoate + [thioredoxin]-dithiol = [thioredoxin]-disulfide + hydrogen sulfide + pyruvate + H(+). Functionally, required for formation of the 2-thio group of the 5-methoxycarbonylmethyl-2-thiouridine modified base in some tRNAs. The protein is Probable 3-mercaptopyruvate sulfurtransferase (tum1) of Schizosaccharomyces pombe (strain 972 / ATCC 24843) (Fission yeast).